We begin with the raw amino-acid sequence, 268 residues long: uncharacterized protein (268 aa).

One can recognise an HTH iclR-type domain in the interval 15–77 (NQALIRGLRL…NAAGSYRLTI (63 aa)). Positions 37-56 (LAKLAELANLNKSTAHRLLQ) form a DNA-binding region, H-T-H motif. One can recognise an IclR-ED domain in the interval 92-265 (IIHVASPYLE…AEQISLELGY (174 aa)).

This is an uncharacterized protein from Haemophilus influenzae (strain ATCC 51907 / DSM 11121 / KW20 / Rd).